The sequence spans 284 residues: Bifunctional protein FolD (284 aa).

Residues 165–167, Ser-190, and Val-231 each bind NADP(+); that span reads GRS.

It belongs to the tetrahydrofolate dehydrogenase/cyclohydrolase family. In terms of assembly, homodimer.

The catalysed reaction is (6R)-5,10-methylene-5,6,7,8-tetrahydrofolate + NADP(+) = (6R)-5,10-methenyltetrahydrofolate + NADPH. It catalyses the reaction (6R)-5,10-methenyltetrahydrofolate + H2O = (6R)-10-formyltetrahydrofolate + H(+). Its pathway is one-carbon metabolism; tetrahydrofolate interconversion. Its function is as follows. Catalyzes the oxidation of 5,10-methylenetetrahydrofolate to 5,10-methenyltetrahydrofolate and then the hydrolysis of 5,10-methenyltetrahydrofolate to 10-formyltetrahydrofolate. In Geobacillus thermodenitrificans (strain NG80-2), this protein is Bifunctional protein FolD.